A 510-amino-acid polypeptide reads, in one-letter code: MPLKLAIVGRPNVGKSTLFNRLVGKKIALVDDQPGVTRDRKMADGRLASLPLSLIDTAGFDNVNDDSLEARMRAQTEAAIAEADLVLFLVDARVGVTPEDETFAGLLRKANIPVVLAANKAEGRAGEAGVFDAFRLGFGEPVGLSAEHGEGMAELYESIRNALGPEAYERALEEAEPDYERGAGEDILEKLAHIDIEDTTLSDDDLVAAIEAADIDADVAEAPVQSDRPIRLAIVGRPNAGKSTLINQLLQSDRMLTGPEAGITRDSITVNWEWEGRQIRLVDTAGLRRKNKVQERLERMSTAETIRSLKYADIVALVMDAHEAMEKQDLQIADLALREGRGVVLVISKWDTVEDTDGAARHIRDLANRLMPNAGGAPVVFLSGLTGRNIEKLMPAVVKVYKDWTARAKTGDLNRWLRHTVEHHPPPSVQGKRIKPRYMAQMKARPPTFVLIASRGDQMPEGYKRYLVNGIREAFDMHGVPIRLFVRQGKNPYAGKVGADGPPRHKRRNN.

EngA-type G domains lie at 3-167 (LKLA…GPEA) and 230-405 (IRLA…KDWT). Residues 9-16 (GRPNVGKS), 56-60 (DTAGF), 119-122 (NKAE), 236-243 (GRPNAGKS), 283-287 (DTAGL), and 348-351 (SKWD) contribute to the GTP site. Positions 406-490 (ARAKTGDLNR…PIRLFVRQGK (85 aa)) constitute a KH-like domain.

Belongs to the TRAFAC class TrmE-Era-EngA-EngB-Septin-like GTPase superfamily. EngA (Der) GTPase family. As to quaternary structure, associates with the 50S ribosomal subunit.

GTPase that plays an essential role in the late steps of ribosome biogenesis. In Hyphomonas neptunium (strain ATCC 15444), this protein is GTPase Der.